We begin with the raw amino-acid sequence, 449 residues long: GTPase Der (449 aa).

2 EngA-type G domains span residues 2 to 169 and 180 to 355; these read FTVA…QLPP and VRFC…EQLT. GTP is bound by residues 8 to 15, 55 to 59, 118 to 121, 186 to 193, 233 to 237, and 298 to 301; these read GRPNVGKS, DTGGL, NKSE, GKPNVGKS, DTAGI, and NKWD. The KH-like domain occupies 356-440; the sequence is KKISTSLLND…PITLYFKSKN (85 aa).

The protein belongs to the TRAFAC class TrmE-Era-EngA-EngB-Septin-like GTPase superfamily. EngA (Der) GTPase family. Associates with the 50S ribosomal subunit.

Functionally, GTPase that plays an essential role in the late steps of ribosome biogenesis. The polypeptide is GTPase Der (Mycoplasma pneumoniae (strain ATCC 29342 / M129 / Subtype 1) (Mycoplasmoides pneumoniae)).